A 137-amino-acid chain; its full sequence is Basic phospholipase A2 beta-bungarotoxin A5 chain (137 aa).

Positions 1–9 (AVCVSLLGA) are cleaved as a signal peptide. A propeptide spanning residues 10–17 (ANIPPQHL) is cleaved from the precursor. Disulfide bonds link Cys-44–Cys-136, Cys-46–Cys-62, Cys-61–Cys-117, Cys-68–Cys-110, Cys-78–Cys-103, and Cys-96–Cys-108. 3 residues coordinate Ca(2+): Tyr-45, Gly-47, and Gly-49. His-65 is an active-site residue. A Ca(2+)-binding site is contributed by Asp-66. Asp-111 is a catalytic residue.

It belongs to the phospholipase A2 family. Group I subfamily. D49 sub-subfamily. Heterodimer; disulfide-linked. The A chains have phospholipase A2 activity and the B chains show homology with the basic protease inhibitors. The cofactor is Ca(2+). As to expression, expressed by the venom gland.

It is found in the secreted. The catalysed reaction is a 1,2-diacyl-sn-glycero-3-phosphocholine + H2O = a 1-acyl-sn-glycero-3-phosphocholine + a fatty acid + H(+). In terms of biological role, snake venom phospholipase A2 (PLA2) that inhibits neuromuscular transmission by blocking acetylcholine release from the nerve termini. PLA2 catalyzes the calcium-dependent hydrolysis of the 2-acyl groups in 3-sn-phosphoglycerides. This is Basic phospholipase A2 beta-bungarotoxin A5 chain from Bungarus multicinctus (Many-banded krait).